Consider the following 174-residue polypeptide: Variant surface antigen F (174 aa).

The first 29 residues, 1–29 (MKKSIFSKKLLFSFGSLVALAAIPLITIS), serve as a signal peptide directing secretion. Cys30 carries N-palmitoyl cysteine lipidation. Cys30 carries the S-diacylglycerol cysteine lipid modification. Positions 32 to 174 (QTNTDQSQQP…PEQGNSQVSK (143 aa)) are disordered. The span at 43 to 53 (SGSGSGSGTSN) shows a compositional bias: gly residues. A run of 9 repeats spans residues 55-67 (SGSTPTPEQGNNQ), 68-80 (GGSTPTPEQGNNQ), 81-93 (GGSTPTPEQGNNQ), 94-106 (GGSTPTPEQGNNQ), 107-119 (GGSTPTPEQGNNQ), 120-132 (GGSTPTPEQGNNQ), 133-145 (GGSTPTPEQGNNQ), 146-158 (GGSTPTPEQGNNQ), and 159-171 (GGSTPTPEQGNSQ). The segment at 55 to 171 (SGSTPTPEQG…TPTPEQGNSQ (117 aa)) is 9 X 13 AA tandem repeats. Positions 62-174 (EQGNNQGGST…PEQGNSQVSK (113 aa)) are enriched in polar residues.

The protein resides in the cell membrane. Functionally, responsible for the antigenic diversity for host adaptation. Expression in E.coli of a construct containing vlpD, vlpE, and vlpF yields antigenically distinguishable products corresponding to each gene. This is Variant surface antigen F (vlpF) from Mesomycoplasma hyorhinis (Mycoplasma hyorhinis).